A 285-amino-acid polypeptide reads, in one-letter code: Putative sugar uptake protein lmo0424 (285 aa).

9 helical membrane-spanning segments follow: residues 2–21, 31–50, 55–77, 111–133, 146–168, 172–194, 207–229, 233–255, and 262–284; these read SIYL…PIIA, QLLG…FWIL, TVLS…LLQF, WQTV…GVVM, SVSF…YVVT, FDVT…AIGI, VTFN…LATA, VATS…ILIF, and LEWT…LSLL.

The protein belongs to the GRP transporter (TC 2.A.7.5) family.

The protein localises to the cell membrane. The chain is Putative sugar uptake protein lmo0424 from Listeria monocytogenes serovar 1/2a (strain ATCC BAA-679 / EGD-e).